The primary structure comprises 72 residues: Penaeidin-2b (72 aa).

Residues 1 to 21 (MRLVVCLVFLASFALVCQGEA) form the signal peptide. Disulfide bonds link Cys-45–Cys-59, Cys-48–Cys-66, and Cys-60–Cys-67. Lys-71 is subject to Lysine amide.

This sequence belongs to the penaeidin family.

Its subcellular location is the cytoplasmic granule. In terms of biological role, antibacterial and antifungal activity. Presents chitin-binding activity. This chain is Penaeidin-2b, found in Penaeus vannamei (Whiteleg shrimp).